The sequence spans 232 residues: Pirin-like protein CC_1473 (232 aa).

It belongs to the pirin family.

The chain is Pirin-like protein CC_1473 from Caulobacter vibrioides (strain ATCC 19089 / CIP 103742 / CB 15) (Caulobacter crescentus).